A 364-amino-acid polypeptide reads, in one-letter code: Serpentine receptor class epsilon-27 (364 aa).

Transmembrane regions (helical) follow at residues 31-51 (VIASIELILYSICLYIVVVSL), 64-84 (FIILVAPFFGIWFELIIGKLI), 125-145 (LLIIAGFMEYHYMFSVVFGAV), 167-187 (IFIPIALTVFFQIIAITCSCL), 195-215 (IITINGTWIVSCACSSIVFFL), 257-277 (LIFSELGTISIIGLIIATLLL), and 290-310 (NALFLNPFGICTVAMYSIPAW).

This sequence belongs to the nematode receptor-like protein sre family.

Its subcellular location is the membrane. The chain is Serpentine receptor class epsilon-27 (sre-27) from Caenorhabditis elegans.